The sequence spans 283 residues: K88 fimbrial protein AC (283 aa).

An N-terminal signal peptide occupies residues 1-21; that stretch reads MKKTLIALAIAASAASGMAHA.

This sequence belongs to the fimbrial K88 protein family. As to quaternary structure, K88 fimbria, 0.1-1 micrometer in length and 7 nanometers in diameter, is composed of about 100 identical subunits.

The protein resides in the fimbrium. Its function is as follows. K88 major fimbrial subunit. Fimbriae (also called pili), are polar filaments radiating from the surface of the bacterium to a length of 0.5-1.5 micrometers and numbering 100-300 per cell. They enable bacteria to colonize the epithelium of specific host organs. The chain is K88 fimbrial protein AC (faeG) from Escherichia coli.